We begin with the raw amino-acid sequence, 338 residues long: Phenylalanine--tRNA ligase alpha subunit (338 aa).

E252 contributes to the Mg(2+) binding site.

Belongs to the class-II aminoacyl-tRNA synthetase family. Phe-tRNA synthetase alpha subunit type 1 subfamily. Tetramer of two alpha and two beta subunits. The cofactor is Mg(2+).

It is found in the cytoplasm. The catalysed reaction is tRNA(Phe) + L-phenylalanine + ATP = L-phenylalanyl-tRNA(Phe) + AMP + diphosphate + H(+). This chain is Phenylalanine--tRNA ligase alpha subunit (pheS), found in Aquifex aeolicus (strain VF5).